Consider the following 298-residue polypeptide: Protein OS-9 homolog (298 aa).

An N-terminal signal peptide occupies residues methionine 1–alanine 25. Residue asparagine 95 is glycosylated (N-linked (GlcNAc...) asparagine). The MRH domain maps to aspartate 121–asparagine 246. A disulfide bridge links cysteine 123 with cysteine 136. 3 residues coordinate a mannooligosaccharide derivative: tryptophan 130, tryptophan 131, and glutamine 143. N-linked (GlcNAc...) asparagine glycans are attached at residues asparagine 171 and asparagine 197. 2 cysteine pairs are disulfide-bonded: cysteine 201/cysteine 232 and cysteine 216/cysteine 244. Aspartate 202, arginine 208, glutamate 228, and tyrosine 234 together coordinate a mannooligosaccharide derivative.

It belongs to the OS-9 family. As to quaternary structure, interacts with HRD3.

The protein resides in the endoplasmic reticulum. Functionally, lectin which functions in endoplasmic reticulum (ER) quality control and ER-associated degradation (ERAD). May bind terminally misfolded non-glycosylated proteins as well as improperly folded glycoproteins, retain them in the ER, and possibly transfer them to the ubiquitination machinery and promote their degradation. This chain is Protein OS-9 homolog, found in Oryza sativa subsp. japonica (Rice).